The sequence spans 335 residues: Fructose-1,6-bisphosphatase class 1 (335 aa).

Mg(2+)-binding residues include E92, D114, L116, and D117. Substrate is bound by residues 117 to 120, N209, and K275; that span reads DGSS. Residue E281 participates in Mg(2+) binding.

This sequence belongs to the FBPase class 1 family. In terms of assembly, homotetramer. Mg(2+) is required as a cofactor.

Its subcellular location is the cytoplasm. It carries out the reaction beta-D-fructose 1,6-bisphosphate + H2O = beta-D-fructose 6-phosphate + phosphate. It functions in the pathway carbohydrate biosynthesis; gluconeogenesis. This chain is Fructose-1,6-bisphosphatase class 1, found in Paracidovorax citrulli (strain AAC00-1) (Acidovorax citrulli).